The chain runs to 191 residues: A-type ATP synthase subunit E 1 (191 aa).

It belongs to the V-ATPase E subunit family. In terms of assembly, has multiple subunits with at least A(3), B(3), C, D, E, F, H, I and proteolipid K(x).

The protein localises to the cell membrane. Component of the A-type ATP synthase that produces ATP from ADP in the presence of a proton gradient across the membrane. The sequence is that of A-type ATP synthase subunit E 1 from Methanospirillum hungatei JF-1 (strain ATCC 27890 / DSM 864 / NBRC 100397 / JF-1).